The following is a 494-amino-acid chain: Alpha-amylase-related protein (494 aa).

The N-terminal stretch at 1 to 20 is a signal peptide; the sequence is MIKFALALTLCLAGASLSLA. Residue glutamine 21 is modified to Pyrrolidone carboxylic acid. The cysteines at positions 48 and 104 are disulfide-linked. The Ca(2+) site is built by asparagine 118, glutamine 169, and aspartate 178. A disulfide bond links cysteine 157 and cysteine 171. Residue arginine 206 coordinates chloride. Aspartate 208 acts as the Nucleophile in catalysis. Histidine 212 contacts Ca(2+). Residue glutamate 245 is the Proton donor of the active site. Residues asparagine 308 and arginine 343 each contribute to the chloride site. 3 cysteine pairs are disulfide-bonded: cysteine 376/cysteine 382, cysteine 418/cysteine 441, and cysteine 448/cysteine 460.

The protein belongs to the glycosyl hydrolase 13 family. Monomer. Ca(2+) is required as a cofactor. Requires chloride as cofactor.

The protein resides in the secreted. It carries out the reaction Endohydrolysis of (1-&gt;4)-alpha-D-glucosidic linkages in polysaccharides containing three or more (1-&gt;4)-alpha-linked D-glucose units.. This is Alpha-amylase-related protein (Amyrel) from Drosophila jambulina (Fruit fly).